A 147-amino-acid polypeptide reads, in one-letter code: Shadow of prion protein (147 aa).

A signal peptide spans 1–24 (MNWTAATCWALLLAAAFLCDSCSA). Positions 26-43 (GGRGGARGSARGVRGGAR) are enriched in gly residues. The tract at residues 26-45 (GGRGGARGSARGVRGGARGA) is disordered. N-linked (GlcNAc...) asparagine glycosylation is present at N107. G122 carries GPI-anchor amidated glycine lipidation. Residues 123-147 (SGSVHSPRICLLLGGTLGALELLRP) constitute a propeptide, removed in mature form.

The protein belongs to the SPRN family. N-glycosylated. In terms of tissue distribution, mainly expressed in brain (at protein level). In brain, it is highly expressed in the hippocampus and cerebellum and is also expressed at lower level in other areas of the brain including the cerebral cortex, the thalamus and the medulla. In hippocampus and cerebellum it is highly expressed in the cell bodies of pyramidal cells and Purkinje cells, respectively.

The protein resides in the cell membrane. Functionally, prion-like protein that has PrP(C)-like neuroprotective activity. May act as a modulator for the biological actions of normal and abnormal PrP. This is Shadow of prion protein (Sprn) from Mus musculus (Mouse).